The chain runs to 273 residues: 5-deoxy-glucuronate isomerase (273 aa).

This sequence belongs to the isomerase IolB family.

It carries out the reaction 5-deoxy-D-glucuronate = 5-dehydro-2-deoxy-D-gluconate. It participates in polyol metabolism; myo-inositol degradation into acetyl-CoA; acetyl-CoA from myo-inositol: step 4/7. Involved in the isomerization of 5-deoxy-glucuronate (5DG) to 5-dehydro-2-deoxy-D-gluconate (DKG or 2-deoxy-5-keto-D-gluconate). The sequence is that of 5-deoxy-glucuronate isomerase from Listeria monocytogenes serovar 1/2a (strain ATCC BAA-679 / EGD-e).